Here is a 38-residue protein sequence, read N- to C-terminus: Large ribosomal subunit protein bL36A (38 aa).

The protein belongs to the bacterial ribosomal protein bL36 family.

The protein is Large ribosomal subunit protein bL36A of Cronobacter sakazakii (strain ATCC BAA-894) (Enterobacter sakazakii).